The following is a 243-amino-acid chain: Venom nerve growth factor 1 (243 aa).

An N-terminal signal peptide occupies residues 1–18 (MSMLCYTLIIAFLIGIWA). The propeptide occupies 19–125 (VPKSEDNAPL…ALNRNIRAKR (107 aa)). 3 cysteine pairs are disulfide-bonded: cysteine 139–cysteine 204, cysteine 182–cysteine 232, and cysteine 192–cysteine 234. The N-linked (GlcNAc...) asparagine glycan is linked to asparagine 148.

This sequence belongs to the NGF-beta family. In terms of assembly, homodimer; non-covalently linked. As to expression, expressed by the venom gland.

The protein localises to the secreted. Functionally, nerve growth factor is important for the development and maintenance of the sympathetic and sensory nervous systems. It stimulates division and differentiation of sympathetic and embryonic sensory neurons as well as basal forebrain cholinergic neurons in the brain. Its relevance in the snake venom is not clear. However, it has been shown to inhibit metalloproteinase-dependent proteolysis of platelet glycoprotein Ib alpha, suggesting a metalloproteinase inhibition to prevent metalloprotease autodigestion and/or protection against prey proteases. Binds a lipid between the two protein chains in the homodimer. The lipid-bound form promotes histamine relase from mouse mast cells, contrary to the lipid-free form. This chain is Venom nerve growth factor 1, found in Naja sputatrix (Malayan spitting cobra).